We begin with the raw amino-acid sequence, 151 residues long: MASMQKRLQKELLALQNDPPAGMTLNERSVQNTITEWFIDMEGAQGTVYEGEKFQLLFKFSSRYPFESPQVMFTGENIPVHPHVYSNGHICLSILTEDWSPALSVQSVCLSIISMLSSCKEKRRPPDNSFYVKTCNKNPKKTKWWYHDDTC.

A UBC core domain is found at 3–151; it reads SMQKRLQKEL…TKWWYHDDTC (149 aa). Cysteine 91 serves as the catalytic Glycyl thioester intermediate.

This sequence belongs to the ubiquitin-conjugating enzyme family.

Its subcellular location is the nucleus. The catalysed reaction is S-ubiquitinyl-[E1 ubiquitin-activating enzyme]-L-cysteine + [E2 ubiquitin-conjugating enzyme]-L-cysteine = [E1 ubiquitin-activating enzyme]-L-cysteine + S-ubiquitinyl-[E2 ubiquitin-conjugating enzyme]-L-cysteine.. It carries out the reaction S-ubiquitinyl-[E1 ubiquitin-activating enzyme]-L-cysteine + [acceptor protein]-N-terminal-amino acid = [E1 ubiquitin-activating enzyme]-L-cysteine + N-terminal-ubiquitinyl-[acceptor protein].. It functions in the pathway protein modification; protein ubiquitination. Its function is as follows. Accepts ubiquitin from the E1 complex and catalyzes its covalent attachment to other proteins. Catalyzes monoubiquitination. Involved in degradation of misfolded chaperone substrate and DNA repair. In Danio rerio (Zebrafish), this protein is Probable ubiquitin-conjugating enzyme E2 W-A (ube2wa).